Here is a 440-residue protein sequence, read N- to C-terminus: Microtubule-associated tumor suppressor 1 homolog (440 aa).

Positions 106–401 (IQHLLSEREE…RLSMENEELL (296 aa)) form a coiled coil. A phosphoserine mark is found at Ser373, Ser394, Ser415, Ser425, Ser429, Ser431, Ser433, Ser434, and Ser438. A disordered region spans residues 407-440 (GDLCSPKRSPTSSAIPFQSPRNSGSFSSPSISPR). Positions 425 to 440 (SPRNSGSFSSPSISPR) are enriched in low complexity.

It belongs to the MTUS1 family. As to quaternary structure, homodimer. Interacts with AGTR2. Interacts with PTPN6. In terms of tissue distribution, present in neurons (at protein level).

It localises to the mitochondrion. Its subcellular location is the golgi apparatus. The protein resides in the cell membrane. The protein localises to the nucleus. Cooperates with AGTR2 to inhibit ERK2 activation and cell proliferation. May be required for AGTR2 cell surface expression. Together with PTPN6, induces UBE2V2 expression upon angiotensin-II stimulation. The polypeptide is Microtubule-associated tumor suppressor 1 homolog (Mtus1) (Rattus norvegicus (Rat)).